Reading from the N-terminus, the 269-residue chain is Imidazole glycerol phosphate synthase subunit HisF (269 aa).

Residues aspartate 23 and aspartate 142 contribute to the active site.

This sequence belongs to the HisA/HisF family. Heterodimer of HisH and HisF.

Its subcellular location is the cytoplasm. It carries out the reaction 5-[(5-phospho-1-deoxy-D-ribulos-1-ylimino)methylamino]-1-(5-phospho-beta-D-ribosyl)imidazole-4-carboxamide + L-glutamine = D-erythro-1-(imidazol-4-yl)glycerol 3-phosphate + 5-amino-1-(5-phospho-beta-D-ribosyl)imidazole-4-carboxamide + L-glutamate + H(+). The protein operates within amino-acid biosynthesis; L-histidine biosynthesis; L-histidine from 5-phospho-alpha-D-ribose 1-diphosphate: step 5/9. Its function is as follows. IGPS catalyzes the conversion of PRFAR and glutamine to IGP, AICAR and glutamate. The HisF subunit catalyzes the cyclization activity that produces IGP and AICAR from PRFAR using the ammonia provided by the HisH subunit. The chain is Imidazole glycerol phosphate synthase subunit HisF from Bordetella pertussis (strain Tohama I / ATCC BAA-589 / NCTC 13251).